Consider the following 259-residue polypeptide: Light-harvesting complex stress-related protein 3.1, chloroplastic (259 aa).

Residues 1–45 (MLANVVSRKASGLRQTPARATVAVKSVSGRRTTAAEPQTAAPVAA) constitute a chloroplast transit peptide. Residue Y51 participates in chlorophyll b binding. Residues F66, E87, and H90 each contribute to the chlorophyll a site. R92 contributes to the chlorophyll b binding site. The helical transmembrane segment at 93-113 (VAMLAALGFVVGEQLQDFPLF) threads the bilayer. Q130 is a binding site for chlorophyll a. A helical membrane pass occupies residues 137–157 (EPLLIAIGVAESYRVAVGWAT). Residues E147 and R150 each contribute to the chlorophyll b site. 5 residues coordinate chlorophyll a: K196, E197, N200, R202, and Q214. Residues 203–223 (LAMIAIAAFVAQELVEQTEIF) form a helical membrane-spanning segment.

Belongs to the light-harvesting chlorophyll a/b-binding (LHC) protein family. In terms of assembly, interacts with the photosystem II-light-harvesting complex II (PSII-LHCII) supercomplex to form PSII-LHCII-LHCSR3 supercomplex.

It localises to the plastid. Its subcellular location is the chloroplast thylakoid membrane. Required for non-photochemical quenching (NPQ), a mechanism that converts and dissipates the harmful excess absorbed light energy into heat and protect the photosynthetic apparatus from photo-oxidative damage. NPQ includes dissipating excess light energy to heat (qE) and the reversible coupling of LHCII to photosystems (state transitions or qT), which are considered separate NPQ mechanisms. Is responsible for most of the excess light energy to heat dissipation (qE), also known as energy-dependent chlorophyll fluorescence quenching activity of chlorophyll excited states. Involved in a de-coupling and re-coupling of energy transfer to photosystem II (PSII) during qT. Binds chlorophyll a and b. Is able to sense luminal acidification of the thylakoid membranes, which occurs along with elevated electron flow caused by excess light. Establishes interactions with photosystem II (PSII) antenna components upon lumen acidification, and protonation of lumen-exposed, negatively charged residues both in LHCSR3 and in PSII antenna components. Mediates excitation energy transfer from light-harvesting complex II (LHCII) to photosystem I (PSI), rather than photosystem II (PSII), at low pH, which mimics the acidified lumen of the thylakoid membranes in high light-exposed chloroplasts. Activates PSI-dependent fluorescence quenching in addition to dissipating excitation energy in LHCII to avoid photooxidative stress under excess light. Contributes with PGRL1 to the regulation of electron flow upstream of photosystem I (PSI), and limits the accumulation of electrons on the PSI acceptor side, thus avoiding PSI photoinhibition. This chain is Light-harvesting complex stress-related protein 3.1, chloroplastic, found in Chlamydomonas reinhardtii (Chlamydomonas smithii).